Here is a 227-residue protein sequence, read N- to C-terminus: ATP synthase F(0) complex subunit a (227 aa).

A run of 6 helical transmembrane segments spans residues 14 to 34 (FLGIPMILMALALPWLLIPTP), 73 to 93 (LASLMMFLLTLNMLGLMPYIF), 98 to 118 (QLSLNLGLAVPLWLATVLIGM), 137 to 157 (ALIPILIIMQTISLFIRPLAL), 179 to 199 (VFVLMPMMPVVAILTAVLLLL), and 203 to 223 (LEVAVAMIQAYVFILLLSLYL).

The protein belongs to the ATPase A chain family. Component of the ATP synthase complex composed at least of ATP5F1A/subunit alpha, ATP5F1B/subunit beta, ATP5MC1/subunit c (homooctomer), MT-ATP6/subunit a, MT-ATP8/subunit 8, ATP5ME/subunit e, ATP5MF/subunit f, ATP5MG/subunit g, ATP5MK/subunit k, ATP5MJ/subunit j, ATP5F1C/subunit gamma, ATP5F1D/subunit delta, ATP5F1E/subunit epsilon, ATP5PF/subunit F6, ATP5PB/subunit b, ATP5PD/subunit d, ATP5PO/subunit OSCP. ATP synthase complex consists of a soluble F(1) head domain (subunits alpha(3) and beta(3)) - the catalytic core - and a membrane F(0) domain - the membrane proton channel (subunits c, a, 8, e, f, g, k and j). These two domains are linked by a central stalk (subunits gamma, delta, and epsilon) rotating inside the F1 region and a stationary peripheral stalk (subunits F6, b, d, and OSCP). Interacts with DNAJC30; interaction is direct.

The protein localises to the mitochondrion inner membrane. It carries out the reaction H(+)(in) = H(+)(out). Subunit a, of the mitochondrial membrane ATP synthase complex (F(1)F(0) ATP synthase or Complex V) that produces ATP from ADP in the presence of a proton gradient across the membrane which is generated by electron transport complexes of the respiratory chain. ATP synthase complex consist of a soluble F(1) head domain - the catalytic core - and a membrane F(1) domain - the membrane proton channel. These two domains are linked by a central stalk rotating inside the F(1) region and a stationary peripheral stalk. During catalysis, ATP synthesis in the catalytic domain of F(1) is coupled via a rotary mechanism of the central stalk subunits to proton translocation. With the subunit c (ATP5MC1), forms the proton-conducting channel in the F(0) domain, that contains two crucial half-channels (inlet and outlet) that facilitate proton movement from the mitochondrial intermembrane space (IMS) into the matrix. Protons are taken up via the inlet half-channel and released through the outlet half-channel, following a Grotthuss mechanism. The polypeptide is ATP synthase F(0) complex subunit a (Gadus morhua (Atlantic cod)).